The sequence spans 475 residues: Nucleoporin-like protein amo1 (475 aa).

The C3H1-type zinc-finger motif lies at 1-25 (MVVCKYFLQNRCRYGTNCKNQHTVP). Residues 165–182 (DKSTSNSTVTSNQFNKPT) are compositionally biased toward polar residues. Disordered regions lie at residues 165–208 (DKST…DIFG) and 220–252 (NASP…SSFG). A compositionally biased stretch (low complexity) spans 183 to 204 (QNSPFNSFSNNNNSFNNNQQAN). Over residues 220 to 242 (NASPFSQNTSSNSFTGSNPVQNN) the composition is skewed to polar residues. Positions 243–252 (PSSFGSSSFG) are enriched in low complexity.

The protein localises to the nucleus. Functionally, involved in the cell polarity process where it is required for the correct termination of microtubule growth at the cell ends during interphase. The sequence is that of Nucleoporin-like protein amo1 (amo1) from Schizosaccharomyces pombe (strain 972 / ATCC 24843) (Fission yeast).